Here is a 277-residue protein sequence, read N- to C-terminus: Phosphatidylglycerol--prolipoprotein diacylglyceryl transferase (277 aa).

Helical transmembrane passes span 17 to 37, 63 to 83, and 101 to 121; these read LAIH…MLLG, ILFL…CLFY, and GGMA…WFAH. Arg146 contacts a 1,2-diacyl-sn-glycero-3-phospho-(1'-sn-glycerol). 3 consecutive transmembrane segments (helical) span residues 182-202, 209-229, and 234-254; these read SQVY…WLYA, GQVA…AEQF, and AFLG…LPMI.

Belongs to the Lgt family.

It localises to the cell inner membrane. The enzyme catalyses L-cysteinyl-[prolipoprotein] + a 1,2-diacyl-sn-glycero-3-phospho-(1'-sn-glycerol) = an S-1,2-diacyl-sn-glyceryl-L-cysteinyl-[prolipoprotein] + sn-glycerol 1-phosphate + H(+). Its pathway is protein modification; lipoprotein biosynthesis (diacylglyceryl transfer). Functionally, catalyzes the transfer of the diacylglyceryl group from phosphatidylglycerol to the sulfhydryl group of the N-terminal cysteine of a prolipoprotein, the first step in the formation of mature lipoproteins. The polypeptide is Phosphatidylglycerol--prolipoprotein diacylglyceryl transferase (Verminephrobacter eiseniae (strain EF01-2)).